Here is a 298-residue protein sequence, read N- to C-terminus: ATP synthase gamma chain (298 aa).

It belongs to the ATPase gamma chain family. As to quaternary structure, F-type ATPases have 2 components, CF(1) - the catalytic core - and CF(0) - the membrane proton channel. CF(1) has five subunits: alpha(3), beta(3), gamma(1), delta(1), epsilon(1). CF(0) has three main subunits: a, b and c.

It localises to the cell membrane. Produces ATP from ADP in the presence of a proton gradient across the membrane. The gamma chain is believed to be important in regulating ATPase activity and the flow of protons through the CF(0) complex. This chain is ATP synthase gamma chain, found in Frankia casuarinae (strain DSM 45818 / CECT 9043 / HFP020203 / CcI3).